The following is a 119-amino-acid chain: MSGKVTTHVLDTSCGKPAAGVVVELWRIVEGGESELLTKAVTNQDGRLDKPLLTENKMARGVYELRFQVGDYFLRNGFVNQAYPFLHVIPVRFGLEDVNEHYHVPLLVAPGGYSTYRGS.

Substrate contacts are provided by H8, R47, and Y116.

It belongs to the transthyretin family. 5-hydroxyisourate hydrolase subfamily. In terms of assembly, homotetramer.

It carries out the reaction 5-hydroxyisourate + H2O = 5-hydroxy-2-oxo-4-ureido-2,5-dihydro-1H-imidazole-5-carboxylate + H(+). It participates in purine metabolism; urate degradation; (S)-allantoin from urate: step 2/3. In terms of biological role, catalyzes the hydrolysis of 5-hydroxyisourate (HIU) to 2-oxo-4-hydroxy-4-carboxy-5-ureidoimidazoline (OHCU). This chain is 5-hydroxyisourate hydrolase, found in Halalkalibacterium halodurans (strain ATCC BAA-125 / DSM 18197 / FERM 7344 / JCM 9153 / C-125) (Bacillus halodurans).